A 306-amino-acid polypeptide reads, in one-letter code: Beta-lactamase 1 (306 aa).

Residues methionine 1–lysine 43 form the signal peptide. Residue serine 89 is the Acyl-ester intermediate of the active site. The active-site Proton acceptor is the glutamate 185. Lysine 251–glycine 253 is a substrate binding site.

The protein belongs to the class-A beta-lactamase family.

The protein localises to the secreted. It catalyses the reaction a beta-lactam + H2O = a substituted beta-amino acid. Functionally, acts preferentially on penicillins. In Bacillus cereus, this protein is Beta-lactamase 1 (penPC).